An 89-amino-acid polypeptide reads, in one-letter code: Large ribosomal subunit protein bL27 (89 aa).

The segment at 1 to 21 (MAHKKAGGSSRNGRDSAGRRL) is disordered.

Belongs to the bacterial ribosomal protein bL27 family.

This chain is Large ribosomal subunit protein bL27, found in Roseobacter denitrificans (strain ATCC 33942 / OCh 114) (Erythrobacter sp. (strain OCh 114)).